Reading from the N-terminus, the 99-residue chain is Plastocyanin (99 aa).

The region spanning 1–99 (IEIKLGGDDG…AGMVGKVTVQ (99 aa)) is the Plastocyanin-like domain. Cu cation-binding residues include His37, Cys84, His87, and Met92.

This sequence belongs to the plastocyanin family. The cofactor is Cu(2+).

The protein resides in the plastid. The protein localises to the chloroplast thylakoid membrane. Participates in electron transfer between P700 and the cytochrome b6-f complex in photosystem I. This is Plastocyanin (PETE) from Rumex obtusifolius (Bitter dock).